We begin with the raw amino-acid sequence, 58 residues long: Small ribosomal subunit protein bS21 (58 aa).

It belongs to the bacterial ribosomal protein bS21 family.

The chain is Small ribosomal subunit protein bS21 from Streptococcus pyogenes serotype M49 (strain NZ131).